A 176-amino-acid chain; its full sequence is Small ribosomal subunit protein uS4 (176 aa).

In terms of domain architecture, S4 RNA-binding spans 104–166 (RRLQTIVYKK…PTSPFKQNPP (63 aa)).

This sequence belongs to the universal ribosomal protein uS4 family. As to quaternary structure, part of the 30S ribosomal subunit. Contacts protein S5. The interaction surface between S4 and S5 is involved in control of translational fidelity.

One of the primary rRNA binding proteins, it binds directly to 16S rRNA where it nucleates assembly of the body of the 30S subunit. Its function is as follows. With S5 and S12 plays an important role in translational accuracy. The protein is Small ribosomal subunit protein uS4 (rps4) of Sulfolobus acidocaldarius (strain ATCC 33909 / DSM 639 / JCM 8929 / NBRC 15157 / NCIMB 11770).